The following is a 91-amino-acid chain: Small ribosomal subunit protein uS19 (91 aa).

This sequence belongs to the universal ribosomal protein uS19 family.

Functionally, protein S19 forms a complex with S13 that binds strongly to the 16S ribosomal RNA. The chain is Small ribosomal subunit protein uS19 from Prochlorococcus marinus subsp. pastoris (strain CCMP1986 / NIES-2087 / MED4).